Consider the following 172-residue polypeptide: Transcriptional repressor NrdR (172 aa).

A zinc finger spans residues 3-34; that stretch reads CPFCGEADTKVIDSRLVAEGDQVRRRRECLSC. The 91-residue stretch at 49 to 139 folds into the ATP-cone domain; the sequence is PRVVKQDGTR…VYRSFQDINE (91 aa).

Belongs to the NrdR family. The cofactor is Zn(2+).

Functionally, negatively regulates transcription of bacterial ribonucleotide reductase nrd genes and operons by binding to NrdR-boxes. The chain is Transcriptional repressor NrdR from Marinobacter nauticus (strain ATCC 700491 / DSM 11845 / VT8) (Marinobacter aquaeolei).